Consider the following 316-residue polypeptide: Geminin coiled-coil domain-containing protein 1 (316 aa).

The stretch at 82–117 (QISANKQLQDTLLQKEEELSRLHEENNKLKEFLNSA) forms a coiled coil. Composition is skewed to polar residues over residues 134–155 (GQSSFCTNPNSRVPFSSNSTPG) and 207–234 (MSLQPKQDSPSSGYSSAHLTPGHSQAAT). Disordered stretches follow at residues 134-160 (GQSSFCTNPNSRVPFSSNSTPGSKAKR) and 207-269 (MSLQ…DVAP). The residue at position 153 (T153) is a Phosphothreonine; by cdk2. Positions 235 to 252 (SCSLSPSQCSSASLPESE) are enriched in low complexity. Residues 253–262 (TASPLSSPTY) show a composition bias toward polar residues.

This sequence belongs to the GEMC1 family. As to quaternary structure, interacts with topbp1. Interacts with Cdc45l and the kinase cdk2-cyclin-E (the interaction is direct). Highly phosphorylated by cdk2; stimulates initiation of DNA replication. Expressed in most tissues. Enriched in proliferating cells from skin and gut.

It is found in the nucleus. Functionally, regulator of DNA replication. Promotes initiation of chromosomal DNA replication by mediating topbp1- and cdk2-dependent recruitment of cdc45l onto replication origins. In Xenopus laevis (African clawed frog), this protein is Geminin coiled-coil domain-containing protein 1 (gmnc).